The following is a 1276-amino-acid chain: Probable histone acetyltransferase HAC-like 3 (1276 aa).

Positions 391–421 (VDRAEQTSNSTVSKPTSPASDGSSGKHYPAK) are disordered. Positions 396–413 (QTSNSTVSKPTSPASDGS) are enriched in polar residues. The PHD-type zinc finger occupies 621 to 689 (SSICGRCHHL…EYTCAKCFLK (69 aa)). The CBP/p300-type HAT domain maps to 704-1130 (ILGARELPRT…ILYHLHDSTC (427 aa)). Acetyl-CoA contacts are provided by residues 827–829 (IDS), 846–847 (RT), and W902. Residues 953–973 (EAERLLEKKDDDTSQKKETQL) adopt a coiled-coil conformation. 2 ZZ-type zinc fingers span residues 1013-1076 (CLQQ…EEPL) and 1125-1187 (LHDS…LQDY). 16 residues coordinate Zn(2+): C1018, C1021, C1033, C1036, C1042, C1045, H1058, H1066, C1130, C1133, C1145, C1148, C1154, C1157, H1168, and H1177. A TAZ-type zinc finger spans residues 1177 to 1260 (HVLQKYTLQD…DCSAPRCRDI (84 aa)).

Its subcellular location is the nucleus. It carries out the reaction L-lysyl-[protein] + acetyl-CoA = N(6)-acetyl-L-lysyl-[protein] + CoA + H(+). Acetyltransferase enzyme. Acetylates histones, giving a specific tag for transcriptional activation. The chain is Probable histone acetyltransferase HAC-like 3 from Oryza sativa subsp. japonica (Rice).